The sequence spans 134 residues: MFDVTLLILLGLAALGFISHNTTVAVSILVLIIVRVTPLNTFFPWIEKQGLTVGIIILTIGVMAPIASGTLPPSTLIHSFVNWKSLVAIAVGVFVSWLGGRGITLMGNQPQLVAGLLVGTVLGVALFRGVRSAH.

4 helical membrane-spanning segments follow: residues 14–34 (ALGFISHNTTVAVSILVLIIV), 51–71 (LTVGIIILTIGVMAPIASGTL), 86–106 (LVAIAVGVFVSWLGGRGITLM), and 110–130 (PQLVAGLLVGTVLGVALFRGV).

It belongs to the UPF0756 family.

The protein resides in the cell membrane. The sequence is that of UPF0756 membrane protein YeaL from Salmonella typhimurium (strain LT2 / SGSC1412 / ATCC 700720).